Reading from the N-terminus, the 144-residue chain is 3-dehydroquinate dehydratase (144 aa).

The Proton acceptor role is filled by Tyr22. Residues Asn73, His79, and Asp86 each coordinate substrate. His99 functions as the Proton donor in the catalytic mechanism. Substrate contacts are provided by residues 100-101 (LS) and Arg110.

The protein belongs to the type-II 3-dehydroquinase family. In terms of assembly, homododecamer.

It carries out the reaction 3-dehydroquinate = 3-dehydroshikimate + H2O. The protein operates within metabolic intermediate biosynthesis; chorismate biosynthesis; chorismate from D-erythrose 4-phosphate and phosphoenolpyruvate: step 3/7. In terms of biological role, catalyzes a trans-dehydration via an enolate intermediate. The sequence is that of 3-dehydroquinate dehydratase from Pelotomaculum thermopropionicum (strain DSM 13744 / JCM 10971 / SI).